The sequence spans 470 residues: Angiopoietin-related protein 6 (470 aa).

The N-terminal stretch at Met1–Ala20 is a signal peptide. Asn58 carries an N-linked (GlcNAc...) asparagine glycan. A coiled-coil region spans residues Ala59 to His116. The N-linked (GlcNAc...) (complex) asparagine glycan is linked to Asn145. Residues Ser214–Val249 form a disordered region. The region spanning Thr251 to Lys469 is the Fibrinogen C-terminal domain. Disulfide bonds link Cys260-Cys287 and Cys410-Cys423.

It localises to the secreted. Its function is as follows. May play a role in the wound healing process. May promote epidermal proliferation, remodeling and regeneration. May promote the chemotactic activity of endothelial cells and induce neovascularization. May counteract high-fat diet-induced obesity and related insulin resistance through increased energy expenditure. The chain is Angiopoietin-related protein 6 (ANGPTL6) from Homo sapiens (Human).